Reading from the N-terminus, the 111-residue chain is Large ribosomal subunit protein P1 (111 aa).

The disordered stretch occupies residues 75-111; sequence AAAPAAEEKAEEEKKEEEEEKKEEEVDLSGLSGMFGF. Residues 88 to 101 show a composition bias toward acidic residues; that stretch reads KKEEEEEKKEEEVD.

Belongs to the eukaryotic ribosomal protein P1/P2 family. As to quaternary structure, part of the 50S ribosomal subunit. Homodimer, it forms part of the ribosomal stalk which helps the ribosome interact with GTP-bound translation factors. Forms a heptameric uL10/P0(P1)2(P1)2(P1)2 complex, where uL10/P0 forms an elongated spine to which the P1 dimers bind in a sequential fashion.

In terms of biological role, forms part of the ribosomal stalk, playing a central role in the interaction of the ribosome with GTP-bound translation factors. This Aeropyrum pernix (strain ATCC 700893 / DSM 11879 / JCM 9820 / NBRC 100138 / K1) protein is Large ribosomal subunit protein P1.